The primary structure comprises 499 residues: Glutelin type-B 1 (499 aa).

The first 24 residues, 1 to 24, serve as a signal peptide directing secretion; sequence MASSVFSRFSIYFCVLLLCHGSMA. Intrachain disulfides connect cysteine 45-cysteine 78 and cysteine 121-cysteine 309. 2 Cupin type-1 domains span residues 50-247 and 315-464; these read LQAF…VAAK and VNIE…EQAR. A disordered region spans residues 467–499; it reads KNNRGEEHGAFTPRFQQQYYPGLSNESESETSE.

Belongs to the 11S seed storage protein (globulins) family. In terms of assembly, hexamer; each subunit is composed of an acidic and a basic chain derived from a single precursor and linked by a disulfide bond.

Seed storage protein. The chain is Glutelin type-B 1 (GluB1-A) from Oryza sativa subsp. japonica (Rice).